We begin with the raw amino-acid sequence, 158 residues long: UPF0225 protein Pput_1155 (158 aa).

This sequence belongs to the UPF0225 family.

The chain is UPF0225 protein Pput_1155 from Pseudomonas putida (strain ATCC 700007 / DSM 6899 / JCM 31910 / BCRC 17059 / LMG 24140 / F1).